We begin with the raw amino-acid sequence, 403 residues long: 4,4'-dithiodibutanoate disulfide reductase (403 aa).

FMN is bound at residue Gln103. The active-site Proton donor is Tyr173. An FMN-binding site is contributed by 348-349 (AR).

Belongs to the NADH:flavin oxidoreductase/NADH oxidase family. It depends on FMN as a cofactor.

The enzyme catalyses 2 4-sulfanylbutanoate + NAD(+) = 4,4'-disulfanyldibutanoate + NADH + H(+). Inactivated by cobalt, nickel and zinc ions. In terms of biological role, involved in the degradation of the organic disulfide 4,4'-dithiodibutyric acid (DTDB). Catalyzes the initial cleavage of DTDB into 2 molecules of 4-mercaptobutyric acid (4MB). Low activities are observed with other disulfide compounds, such as 3,3'-dithiodipropionic acid DTDP, 3,3'-thiodipropionic acid TDP and DTNB. The polypeptide is 4,4'-dithiodibutanoate disulfide reductase (Rhodococcus erythropolis (Arthrobacter picolinophilus)).